The chain runs to 49 residues: Small ribosomal subunit protein eS31 (49 aa).

Positions 21, 24, 39, and 42 each coordinate Zn(2+). The segment at 21–42 adopts a C4-type zinc-finger fold; it reads CPRCGPGTFLADHKNRLTCGKC.

It belongs to the eukaryotic ribosomal protein eS31 family. In terms of assembly, part of the 30S ribosomal subunit. The cofactor is Zn(2+).

The chain is Small ribosomal subunit protein eS31 from Methanosarcina barkeri (strain Fusaro / DSM 804).